Consider the following 288-residue polypeptide: MITKTTRWPSPAKLNLFLYINGQQENGYHELQTLFQFIDLCDHLTITSNQSGQITLAPDIPGVKTEDNLIWKAATLLQQHSQCEFGAHIEIEKILPMGGGIGGGSSNAATVLIALNFLWQLNLSNDTLAALGVKLGADVPIFVHGFAAFAEGIGEKLQPATPKELWYVLIKPEVSIATVDVFTHPDLVRNTPKQPLNALLEATYVNDCEKIVRSVYPEVDYQLSWLLEYAPSRLTGTGACVFAEFNSEKEAQDVYSLIPDNATGFIARGMNTSPLNRTLEEYKSLCKI.

Residue lysine 13 is part of the active site. An ATP-binding site is contributed by 96-106; sequence PMGGGIGGGSS. The active site involves aspartate 138.

It belongs to the GHMP kinase family. IspE subfamily.

The enzyme catalyses 4-CDP-2-C-methyl-D-erythritol + ATP = 4-CDP-2-C-methyl-D-erythritol 2-phosphate + ADP + H(+). Its pathway is isoprenoid biosynthesis; isopentenyl diphosphate biosynthesis via DXP pathway; isopentenyl diphosphate from 1-deoxy-D-xylulose 5-phosphate: step 3/6. In terms of biological role, catalyzes the phosphorylation of the position 2 hydroxy group of 4-diphosphocytidyl-2C-methyl-D-erythritol. This Aliivibrio fischeri (strain MJ11) (Vibrio fischeri) protein is 4-diphosphocytidyl-2-C-methyl-D-erythritol kinase.